The chain runs to 274 residues: MRKSMISFLEKKAKNEKITMVSAYDYHSAKILDNCDIDIILVGDSLAMTVLGMQDTLSVTMDEMLIFTKAVSRGAKKSFVLADMPFMSYQSSDRDAILNASRFIKESHANGVKVEGGIEIASKIKLISQSGIPVVAHLGLTPQAVNMLGGYRVQGKDLQSAQKIIDDAKAVQDAGACMLVVECVPVKLAQKISSILEIPTIGIGSGKYCDGQVLVYHDLLGLNKDFKAKFVKHFDKIDPQVGVEKYRDEVKSGIFPSQEHSFDYLDDELLDKLY.

Mg(2+) contacts are provided by aspartate 44 and aspartate 83. 3-methyl-2-oxobutanoate-binding positions include 44–45, aspartate 83, and lysine 113; that span reads DS. Residue glutamate 115 participates in Mg(2+) binding. Catalysis depends on glutamate 182, which acts as the Proton acceptor.

This sequence belongs to the PanB family. In terms of assembly, homodecamer; pentamer of dimers. Mg(2+) is required as a cofactor.

Its subcellular location is the cytoplasm. It catalyses the reaction 3-methyl-2-oxobutanoate + (6R)-5,10-methylene-5,6,7,8-tetrahydrofolate + H2O = 2-dehydropantoate + (6S)-5,6,7,8-tetrahydrofolate. It functions in the pathway cofactor biosynthesis; (R)-pantothenate biosynthesis; (R)-pantoate from 3-methyl-2-oxobutanoate: step 1/2. In terms of biological role, catalyzes the reversible reaction in which hydroxymethyl group from 5,10-methylenetetrahydrofolate is transferred onto alpha-ketoisovalerate to form ketopantoate. The sequence is that of 3-methyl-2-oxobutanoate hydroxymethyltransferase from Campylobacter jejuni subsp. jejuni serotype O:23/36 (strain 81-176).